The sequence spans 364 residues: Developmentally-regulated GTP-binding protein 2 (364 aa).

Lysine 21 is modified ((3S)-3-hydroxylysine). Positions 63 to 288 constitute an OBG-type G domain; that stretch reads ARVALIGFPS…LLEMLWEYLA (226 aa). GTP contacts are provided by residues 69–76, 94–98, 115–118, 246–249, and 269–271; these read GFPSVGKS, FTTLT, DLPG, NKID, and SCG. The Mg(2+) site is built by serine 76 and threonine 96. The TGS domain occupies 288-363; that stretch reads ALTCIYTKKR…EHEDVIQIVK (76 aa).

Belongs to the TRAFAC class OBG-HflX-like GTPase superfamily. OBG GTPase family. In terms of assembly, interacts with RWDD1; this interaction confers protection to polyubiquitination and proteolytic degradation. Interacts with JMJD7; this interaction is direct. Mg(2+) serves as cofactor. Polyubiquitinated. Post-translationally, hydroxylated (with S stereochemistry) at C-3 of Lys-21 by JMJD7. As to expression, fairly high levels in liver, heart, kidney, and brain. Very low levels in lung, spleen, testis and skeletal muscle.

It localises to the nucleus. It is found in the cytoplasm. The enzyme catalyses GTP + H2O = GDP + phosphate + H(+). Functionally, catalyzes the conversion of GTP to GDP through hydrolysis of the gamma-phosphate bond in GTP. When hydroxylated at C-3 of 'Lys-21' by JMJD7, may bind to RNA and play a role in translation. This chain is Developmentally-regulated GTP-binding protein 2 (Drg2), found in Mus musculus (Mouse).